The sequence spans 291 residues: Transcription antitermination protein NusB (291 aa).

The protein belongs to the NusB family.

Functionally, involved in transcription antitermination. Required for transcription of ribosomal RNA (rRNA) genes. Binds specifically to the boxA antiterminator sequence of the ribosomal RNA (rrn) operons. This chain is Transcription antitermination protein NusB, found in Synechococcus sp. (strain JA-2-3B'a(2-13)) (Cyanobacteria bacterium Yellowstone B-Prime).